Consider the following 732-residue polypeptide: MKSVKIMGTMPPSISLAKAHERISQHWQNPVGELNIGGKRYRIIDNQVLRLNPHSGFSLFREGVGKIFSGKMFNFSIARNLTDTLHAAQKTTSQELRSDIPNALSNLFGAKPQTELPLGWKGEPLSGAPDLEGMRVAETDKFAEGESHISIIETKDKQRLVAKIERSIAEGHLFAELEAYKHIYKTAGKHPNLANVHGMAVVPYGNRKEEALLMDEVDGWRCSDTLRTLADSWKQGKINSEAYWGTIKFIAHRLLDVTNHLAKAGVVHNDIKPGNVVFDRASGEPVVIDLGLHSRSGEQPKGFTESFKAPELGVGNLGASEKSDVFLVVSTLLHCIEGFEKNPEIKPNQGLRFITSEPAHVMDENGYPIHRPGIAGVETAYTRFITDILGVSADSRPDSNEARLHEFLSDGTIDEESAKQILKDTLTGEMSPLSTDVRRITPKKLRELSDLLRTHLSSAATKQLDMGGVLSDLDTMLVALDKAEREGGVDKDQLKSFNSLILKTYRVIEDYVKGREGDTKNSSTEVSPYHRSNFMLSIVEPSLQRIQKHLDQTHSFSDIGSLVRAHKHLETLLEVLVTLSQQGQPVSSETYGFLNRLTEAKITLSQQLNTLQQQQESAKAQLSILINRSGSWADVARQSLQRFDSTRPVVKFGTEQYTAIHRQMMAAHAAITLQEVSEFTDDMRNFTVDSIPLLIQLGRSSLMDEHLVEQREKLRELTTIAERLNRLEREWM.

Positions 136-408 (VAETDKFAEG…SNEARLHEFL (273 aa)) constitute a Protein kinase domain. ATP contacts are provided by residues 142-150 (FAEGESHIS) and Lys-163. The active-site Proton acceptor is the Asp-270.

It belongs to the protein kinase superfamily. Ser/Thr protein kinase family.

The protein localises to the secreted. The enzyme catalyses L-seryl-[protein] + ATP = O-phospho-L-seryl-[protein] + ADP + H(+). It catalyses the reaction L-threonyl-[protein] + ATP = O-phospho-L-threonyl-[protein] + ADP + H(+). Functionally, acts as a virulence determinant. The polypeptide is Protein kinase YpkA (ypkA) (Yersinia pestis).